Here is a 61-residue protein sequence, read N- to C-terminus: Putative antitoxin VapB13 (61 aa).

The protein belongs to the UPF0165 family.

Functionally, possibly the antitoxin component of a type II toxin-antitoxin (TA) system. Its cognate toxin is VapC13 (Potential). This is Putative antitoxin VapB13 (vapB13) from Archaeoglobus fulgidus (strain ATCC 49558 / DSM 4304 / JCM 9628 / NBRC 100126 / VC-16).